A 739-amino-acid chain; its full sequence is Phosphoribosylformylglycinamidine synthase subunit PurL (739 aa).

Residue His54 is part of the active site. ATP is bound by residues Tyr57 and Lys96. Mg(2+) is bound at residue Glu98. Substrate-binding positions include Ser99–His102 and Arg121. Catalysis depends on His100, which acts as the Proton acceptor. Mg(2+) is bound at residue Asp122. Residue Gln245 participates in substrate binding. Asp275 lines the Mg(2+) pocket. Residue Glu319–Gln321 coordinates substrate. Asp504 and Gly541 together coordinate ATP. Residue Asn542 coordinates Mg(2+). Ser544 lines the substrate pocket.

The protein belongs to the FGAMS family. Monomer. Part of the FGAM synthase complex composed of 1 PurL, 1 PurQ and 2 PurS subunits.

It localises to the cytoplasm. The enzyme catalyses N(2)-formyl-N(1)-(5-phospho-beta-D-ribosyl)glycinamide + L-glutamine + ATP + H2O = 2-formamido-N(1)-(5-O-phospho-beta-D-ribosyl)acetamidine + L-glutamate + ADP + phosphate + H(+). It functions in the pathway purine metabolism; IMP biosynthesis via de novo pathway; 5-amino-1-(5-phospho-D-ribosyl)imidazole from N(2)-formyl-N(1)-(5-phospho-D-ribosyl)glycinamide: step 1/2. Functionally, part of the phosphoribosylformylglycinamidine synthase complex involved in the purines biosynthetic pathway. Catalyzes the ATP-dependent conversion of formylglycinamide ribonucleotide (FGAR) and glutamine to yield formylglycinamidine ribonucleotide (FGAM) and glutamate. The FGAM synthase complex is composed of three subunits. PurQ produces an ammonia molecule by converting glutamine to glutamate. PurL transfers the ammonia molecule to FGAR to form FGAM in an ATP-dependent manner. PurS interacts with PurQ and PurL and is thought to assist in the transfer of the ammonia molecule from PurQ to PurL. The polypeptide is Phosphoribosylformylglycinamidine synthase subunit PurL (Lactococcus lactis subsp. lactis (strain IL1403) (Streptococcus lactis)).